Reading from the N-terminus, the 1151-residue chain is Sterol regulatory element-binding protein 1 (1151 aa).

The segment at Met-1 to Asp-59 is transcriptional activation (acidic). Over Met-1 to Arg-487 the chain is Cytoplasmic. Positions Thr-27 to Leu-35 match the 9aaTAD motif. Disordered stretches follow at residues Gln-39–Glu-125 and Gly-164–Thr-184. Residues Gly-57–Gly-69 are compositionally biased toward low complexity. The segment covering Thr-91–Thr-105 has biased composition (pro residues). 2 positions are modified to phosphoserine: Ser-98 and Ser-117. Residues Gly-170–Thr-184 show a composition bias toward polar residues. The interaction with LMNA stretch occupies residues Gln-234 to Cys-497. Residues Glu-324–Leu-374 enclose the bHLH domain. Phosphoserine; by SIK1 is present on residues Ser-338 and Ser-339. The tract at residues Leu-374 to Lys-396 is leucine-zipper. Ser-397 carries the post-translational modification Phosphoserine; by AMPK. A disordered region spans residues Lys-399 to Gly-479. Position 403 is a phosphoserine; by SIK1 (Ser-403). Residues Asp-431–Ser-448 show a composition bias toward low complexity. Residue Ser-457 is modified to Phosphoserine. Residues Leu-488–Gly-508 form a helical membrane-spanning segment. Residues Ser-509–Pro-547 lie on the Lumenal side of the membrane. A helical membrane pass occupies residues Leu-548–Gly-568. At Glu-569 to Ser-1151 the chain is on the cytoplasmic side. The segment at Arg-987–Ala-1006 is disordered. Over residues Gln-995 to Ala-1006 the composition is skewed to low complexity. The residue at position 1060 (Ser-1060) is a Phosphoserine.

The protein belongs to the SREBP family. Efficient DNA binding of the soluble transcription factor fragment requires dimerization with another bHLH protein. Interacts with CEBPA, the interaction produces a transcriptional synergy. Interacts with LMNA. In terms of assembly, forms a tight complex with SCAP, the SCAP-SREBP complex, in the endoplasmic reticulum membrane and the Golgi apparatus. Interacts with PAQR3; the interaction anchors the SCAP-SREBP complex to the Golgi apparatus in low cholesterol conditions. Processed in the Golgi apparatus, releasing the protein from the membrane. At low cholesterol the SCAP-SREBP complex is recruited into COPII vesicles for export from the endoplasmic reticulum. In the Golgi, complex SREBPs are cleaved sequentially by site-1 (MBTPS1, S1P) and site-2 (MBTPS2, S2P) proteases. The first cleavage by site-1 protease occurs within the luminal loop, the second cleavage by site-2 protease occurs within the first transmembrane domain, releasing the transcription factor from the Golgi membrane. Post-translationally, phosphorylated by AMPK, leading to suppress protein processing and nuclear translocation, and repress target gene expression. Phosphorylation at Ser-403 by SIK1 represses activity possibly by inhibiting DNA-binding. In terms of processing, SCAP-free SREBF1 is ubiquitinated by the BCR(ARMC5) complex, leading to its degradation. Ubiquitinated; the nuclear form has a rapid turnover and is rapidly ubiquitinated and degraded by the proteasome in the nucleus.

Its subcellular location is the endoplasmic reticulum membrane. The protein localises to the golgi apparatus membrane. It localises to the cytoplasmic vesicle. It is found in the COPII-coated vesicle membrane. The protein resides in the nucleus. Its activity is regulated as follows. Activation by cleavage is down-regulated upon activation of SIRT3-dependent PRKAA1/AMPK-alpha signaling cascade which leads to inhibition of ATP-consuming lipogenesis to restore cellular energy balance. Its function is as follows. Precursor of the transcription factor form (Processed sterol regulatory element-binding protein 1), which is embedded in the endoplasmic reticulum membrane. Low sterol concentrations promote processing of this form, releasing the transcription factor form that translocates into the nucleus and activates transcription of genes involved in cholesterol biosynthesis and lipid homeostasis. Key transcription factor that regulates expression of genes involved in cholesterol biosynthesis and lipid homeostasis. Binds to the sterol regulatory element 1 (SRE-1) (5'-ATCACCCCAC-3'). Has dual sequence specificity binding to both an E-box motif (5'-ATCACGTGA-3') and to SRE-1 (5'-ATCACCCCAC-3'). Regulates the promoters of genes involved in cholesterol biosynthesis and the LDL receptor (LDLR) pathway of sterol regulation. The polypeptide is Sterol regulatory element-binding protein 1 (SREBF1) (Sus scrofa (Pig)).